Consider the following 178-residue polypeptide: Protein GrpE (178 aa).

Over residues 1–11 (MAEDQAPREET) the composition is skewed to basic and acidic residues. Residues 1 to 30 (MAEDQAPREETVEAPELTEAPEIDELETLR) are disordered.

It belongs to the GrpE family. Homodimer.

The protein resides in the cytoplasm. Its function is as follows. Participates actively in the response to hyperosmotic and heat shock by preventing the aggregation of stress-denatured proteins, in association with DnaK and GrpE. It is the nucleotide exchange factor for DnaK and may function as a thermosensor. Unfolded proteins bind initially to DnaJ; upon interaction with the DnaJ-bound protein, DnaK hydrolyzes its bound ATP, resulting in the formation of a stable complex. GrpE releases ADP from DnaK; ATP binding to DnaK triggers the release of the substrate protein, thus completing the reaction cycle. Several rounds of ATP-dependent interactions between DnaJ, DnaK and GrpE are required for fully efficient folding. In Cereibacter sphaeroides (strain ATCC 17023 / DSM 158 / JCM 6121 / CCUG 31486 / LMG 2827 / NBRC 12203 / NCIMB 8253 / ATH 2.4.1.) (Rhodobacter sphaeroides), this protein is Protein GrpE.